The following is a 68-amino-acid chain: Large ribosomal subunit protein uL29 (68 aa).

Belongs to the universal ribosomal protein uL29 family.

This chain is Large ribosomal subunit protein uL29, found in Limosilactobacillus reuteri (strain DSM 20016) (Lactobacillus reuteri).